The chain runs to 213 residues: Pyrrolidone-carboxylate peptidase (213 aa).

Catalysis depends on residues Glu-81, Cys-144, and His-166.

The protein belongs to the peptidase C15 family. As to quaternary structure, homotetramer.

It is found in the cytoplasm. The enzyme catalyses Release of an N-terminal pyroglutamyl group from a polypeptide, the second amino acid generally not being Pro.. Removes 5-oxoproline from various penultimate amino acid residues except L-proline. This chain is Pyrrolidone-carboxylate peptidase, found in Pseudomonas fluorescens (strain SBW25).